We begin with the raw amino-acid sequence, 590 residues long: CTP synthase (590 aa).

An amidoligase domain region spans residues 1–281; sequence MPALRKHPQT…DAYVVRRLNL (281 aa). CTP is bound at residue S23. Position 23 (S23) interacts with UTP. ATP-binding positions include 24–29 and D81; that span reads SLGKGL. Mg(2+) is bound by residues D81 and E155. CTP contacts are provided by residues 162–164, 202–207, and K238; these read DIE and KTKPTQ. UTP contacts are provided by residues 202–207 and K238; that span reads KTKPTQ. The region spanning 306 to 554 is the Glutamine amidotransferase type-1 domain; the sequence is RIALVGKYID…IGAAIDYKAA (249 aa). G369 is an L-glutamine binding site. The active-site Nucleophile; for glutamine hydrolysis is the C396. L-glutamine contacts are provided by residues 397–400, E419, and R480; that span reads LGLQ. Active-site residues include H527 and E529.

It belongs to the CTP synthase family. As to quaternary structure, homotetramer.

It carries out the reaction UTP + L-glutamine + ATP + H2O = CTP + L-glutamate + ADP + phosphate + 2 H(+). The catalysed reaction is L-glutamine + H2O = L-glutamate + NH4(+). The enzyme catalyses UTP + NH4(+) + ATP = CTP + ADP + phosphate + 2 H(+). It participates in pyrimidine metabolism; CTP biosynthesis via de novo pathway; CTP from UDP: step 2/2. Allosterically activated by GTP, when glutamine is the substrate; GTP has no effect on the reaction when ammonia is the substrate. The allosteric effector GTP functions by stabilizing the protein conformation that binds the tetrahedral intermediate(s) formed during glutamine hydrolysis. Inhibited by the product CTP, via allosteric rather than competitive inhibition. Functionally, catalyzes the ATP-dependent amination of UTP to CTP with either L-glutamine or ammonia as the source of nitrogen. Regulates intracellular CTP levels through interactions with the four ribonucleotide triphosphates. The sequence is that of CTP synthase from Mycolicibacterium smegmatis (strain ATCC 700084 / mc(2)155) (Mycobacterium smegmatis).